The sequence spans 144 residues: uncharacterized protein (144 aa).

The stretch at 23 to 82 forms a coiled coil; sequence EELYKKLENNLRKIETSYLDSKHCQDFKRKIEYYKIVPLISETKEIIKVLIQKIETLEIK.

This is an uncharacterized protein from Acanthamoeba polyphaga mimivirus (APMV).